The following is a 718-amino-acid chain: Amino-acid acetyltransferase, mitochondrial (718 aa).

Residues 1–36 (MNPNAVWPRTAQSSLKKHQVSLCTCQRRSHYRLRSF) constitute a mitochondrion transit peptide. The interval 97–116 (QHQPDLPQKPTSAPASTAKI) is disordered. An N-acetyltransferase domain is found at 539–708 (RQPRLRLDDP…YEAVCRSIQP (170 aa)).

Belongs to the acetyltransferase family.

It is found in the mitochondrion. It catalyses the reaction L-glutamate + acetyl-CoA = N-acetyl-L-glutamate + CoA + H(+). The protein operates within amino-acid biosynthesis; L-arginine biosynthesis; N(2)-acetyl-L-ornithine from L-glutamate: step 1/4. N-acetylglutamate synthase involved in arginine biosynthesis. This is Amino-acid acetyltransferase, mitochondrial (arg2) from Aspergillus clavatus (strain ATCC 1007 / CBS 513.65 / DSM 816 / NCTC 3887 / NRRL 1 / QM 1276 / 107).